A 114-amino-acid polypeptide reads, in one-letter code: Large ribosomal subunit protein bL19 (114 aa).

This sequence belongs to the bacterial ribosomal protein bL19 family.

Its function is as follows. This protein is located at the 30S-50S ribosomal subunit interface and may play a role in the structure and function of the aminoacyl-tRNA binding site. The protein is Large ribosomal subunit protein bL19 (rplS) of Listeria monocytogenes serovar 1/2a (strain ATCC BAA-679 / EGD-e).